The sequence spans 89 residues: Small ribosomal subunit protein uS15 (89 aa).

The protein belongs to the universal ribosomal protein uS15 family. Part of the 30S ribosomal subunit. Forms a bridge to the 50S subunit in the 70S ribosome, contacting the 23S rRNA.

One of the primary rRNA binding proteins, it binds directly to 16S rRNA where it helps nucleate assembly of the platform of the 30S subunit by binding and bridging several RNA helices of the 16S rRNA. Functionally, forms an intersubunit bridge (bridge B4) with the 23S rRNA of the 50S subunit in the ribosome. The sequence is that of Small ribosomal subunit protein uS15 from Shewanella halifaxensis (strain HAW-EB4).